We begin with the raw amino-acid sequence, 504 residues long: Maturase K (504 aa).

The protein belongs to the intron maturase 2 family. MatK subfamily.

The protein resides in the plastid. The protein localises to the chloroplast. Its function is as follows. Usually encoded in the trnK tRNA gene intron. Probably assists in splicing its own and other chloroplast group II introns. The sequence is that of Maturase K from Nepenthes alata (Winged pitcher plant).